We begin with the raw amino-acid sequence, 77 residues long: Liver-expressed antimicrobial peptide 2 (77 aa).

Positions 1–22 are cleaved as a signal peptide; that stretch reads MWHLKLFAVLMICLLLLAQVDG. Positions 23 to 37 are excised as a propeptide; the sequence is SPIPQQSSAKRRPRR. 2 disulfides stabilise this stretch: cysteine 54-cysteine 65 and cysteine 60-cysteine 70.

The protein belongs to the LEAP2 family.

The protein resides in the secreted. Functionally, has an antimicrobial activity. The chain is Liver-expressed antimicrobial peptide 2 (LEAP2) from Bos taurus (Bovine).